The following is a 422-amino-acid chain: UDP-N-acetylmuramoylalanine--D-glutamate ligase (422 aa).

102–108 (GTNGKTT) lines the ATP pocket.

This sequence belongs to the MurCDEF family.

It is found in the cytoplasm. The catalysed reaction is UDP-N-acetyl-alpha-D-muramoyl-L-alanine + D-glutamate + ATP = UDP-N-acetyl-alpha-D-muramoyl-L-alanyl-D-glutamate + ADP + phosphate + H(+). It participates in cell wall biogenesis; peptidoglycan biosynthesis. Its function is as follows. Cell wall formation. Catalyzes the addition of glutamate to the nucleotide precursor UDP-N-acetylmuramoyl-L-alanine (UMA). This is UDP-N-acetylmuramoylalanine--D-glutamate ligase from Helicobacter pylori (strain J99 / ATCC 700824) (Campylobacter pylori J99).